Reading from the N-terminus, the 516-residue chain is MSIVSSVAFVPRGYASEFPKSYDIDEIEYERINQLSKLKLEDARADLQSSMEDSNKANGNGEETTDGAEGVLQTSEEVDDELKVYNLDTYDDDEEEAETEGPAAMFSNIRGLAYHENGEKDPYITIDPQEQDDLEREEMQILPTDSLLLAARTEDNLSHVEVYVYEPTEENLYVHHDFLLPTFPLCLEWLDYKVGTSDNAPGNYVAVGTFDPEIEIWDLDIIDAVYPAAVLGAGASQVNKKKKKSKKINDSYHTDAVLALSSNRNAHNLLVSGSADTTLKLWDLSTCNCVKSFTYHSDKVSCLDWYSKAPSVLLSGSYDKTAKIADLRLEEAPSSFQVTSDVENVAWDQHSENNFFIGTDNGIVYYCDARNLSKSVWQLQAHDGPISCLSVNPSVPSFVATGSTDRVVKLWNTSDSSPKMVVSRDLDVGRVFTCSFTTDESTAFHLAASGSKGVVRVWDTATNPGVRKAFESRVTEEVTKKERIVQLEDRGAGEDSSDDDDYEDIEDDDDQDAEMS.

S21 carries the post-translational modification Phosphoserine. The tract at residues 46–74 is disordered; the sequence is DLQSSMEDSNKANGNGEETTDGAEGVLQT. Over residues 47-62 the composition is skewed to polar residues; that stretch reads LQSSMEDSNKANGNGE. WD repeat units follow at residues 182 to 227, 252 to 292, 295 to 335, 337 to 377, 381 to 421, and 426 to 468; these read TFPL…AVYP, YHTD…CVKS, YHSD…APSS, QVTS…KSVW, AHDG…PKMV, and LDVG…GVRK. Positions 482–493 are enriched in basic and acidic residues; that stretch reads ERIVQLEDRGAG. The interval 482–516 is disordered; the sequence is ERIVQLEDRGAGEDSSDDDDYEDIEDDDDQDAEMS. A compositionally biased stretch (acidic residues) spans 495–516; the sequence is DSSDDDDYEDIEDDDDQDAEMS. Phosphoserine occurs at positions 496 and 497.

The protein localises to the cytoplasm. It localises to the nucleus. It is found in the nucleolus. This is an uncharacterized protein from Schizosaccharomyces pombe (strain 972 / ATCC 24843) (Fission yeast).